A 433-amino-acid chain; its full sequence is MTARYERSAALYERAVARIVGGVNSPARSFKSVGGGAPVFMARGQGPYLYDVDGNRYIDYIGAFGAGMFGHGHPELVAAVARAAEGGTIYGTPNPWEVELAERIHQALPSMERIRFVTTGTEAVMSAVRVARAFTGRPKIIKMEGCYHGHSDFALIAAGSGPSQLGTPDSAGVTEGVAQDVITVPYNDLDSLGEALDVWGPQVAAVLVEPIVGNFGVAMPKPGYLEGVKRLAHAHGALLIFDEVITGFRVAYGGAQTLLGIEPDLTTLGKIIGGGLPLAAYGGRAEIMDWVAPLGPAYQAGTLAGNPLCMQVALTGLEILSRPGVYERLDADAAYLADGLVRSARSHGHTVQLGRAGSMFTLFFCDEPVVDYRTAQRSDPAKFAAMFRGLLDRGIALAPSRFEAWMLTVQHTRADLEETLQIADEVFAQMAGQ.

Position 270 is an N6-(pyridoxal phosphate)lysine (Lys-270).

This sequence belongs to the class-III pyridoxal-phosphate-dependent aminotransferase family. HemL subfamily. Homodimer. It depends on pyridoxal 5'-phosphate as a cofactor.

It localises to the cytoplasm. The catalysed reaction is (S)-4-amino-5-oxopentanoate = 5-aminolevulinate. It participates in porphyrin-containing compound metabolism; protoporphyrin-IX biosynthesis; 5-aminolevulinate from L-glutamyl-tRNA(Glu): step 2/2. The sequence is that of Glutamate-1-semialdehyde 2,1-aminomutase from Symbiobacterium thermophilum (strain DSM 24528 / JCM 14929 / IAM 14863 / T).